Here is a 1046-residue protein sequence, read N- to C-terminus: Protein HBT1 (1046 aa).

3 disordered regions span residues 1–455 (MNMN…AAEK), 469–894 (DYQQ…LGGA), and 908–1046 (PSLI…RSEI). Phosphoserine is present on serine 41. Residues 81 to 96 (KDSETPHEDTEADANR) show a composition bias toward basic and acidic residues. Composition is skewed to polar residues over residues 98–149 (ANVT…SPPT), 175–191 (IATT…TSPV), and 228–301 (ANTG…NTDS). Serine 303 bears the Phosphoserine mark. Residues 327-341 (VYTSTGPKSNVSSGM) show a composition bias toward polar residues. At serine 363 the chain carries Phosphoserine. Polar residues-rich tracts occupy residues 389-408 (QTGL…QQTM) and 420-429 (GFVSQQPSYH). Over residues 430 to 455 (DSNKNIQHPEKNKVDNKNISERAAEK) the composition is skewed to basic and acidic residues. Residues 488–498 (YSSSAGKNKNL) show a composition bias toward polar residues. A Phosphoserine modification is found at serine 491. Positions 529–538 (GHMKYNDNGR) are enriched in basic and acidic residues. Positions 548-559 (QAGSQNTNNNID) are enriched in polar residues. At serine 561 the chain carries Phosphoserine. The span at 570–582 (GLSNDATTRNNVV) shows a compositional bias: polar residues. The span at 586 to 597 (MKDEDMNEDSTK) shows a compositional bias: basic and acidic residues. Positions 605–619 (YLDDVEDYHENDIDD) are enriched in acidic residues. The span at 621–630 (SNAKKNDLYS) shows a compositional bias: basic and acidic residues. Serine 671 is subject to Phosphoserine. The span at 742–756 (FTNNPETGTTGNVDT) shows a compositional bias: polar residues. The segment covering 773–782 (DDSKNTDTHL) has biased composition (basic and acidic residues). Composition is skewed to polar residues over residues 792-802 (NSRSGDTTYSK) and 837-855 (SSEQ…NQEY). Tyrosine 855 is subject to Phosphotyrosine. A Phosphoserine modification is found at serine 857. Residues 868–890 (KVLEEDAPGYKREVDLKNKRRTD) show a composition bias toward basic and acidic residues. Residues 922-951 (DTNTSSSQKPSEGTYPETTSYSIHNETTSQ) are compositionally biased toward polar residues. Over residues 952 to 963 (GRKVSVGSMGSG) the composition is skewed to low complexity. Residues 964 to 976 (KSKHHHNHHRHSR) show a composition bias toward basic residues. At serine 1005 the chain carries Phosphoserine. Positions 1006-1019 (DEGEQDYHDDEQGE) are enriched in acidic residues. Serine 1034 carries the phosphoserine modification.

In terms of assembly, conjugated with HUB1. HUB1 has not the classical C-terminal Gly residue, so it is still unknown how conjugation may occur.

The protein resides in the cytoplasm. Functionally, polarity-determining protein which forms a conjugate with the ubiquitin-like modifier HUB1. Involved in bud site selection and cellular morphogenesis during conjugation. Required for survival during stationary phase. The polypeptide is Protein HBT1 (HBT1) (Saccharomyces cerevisiae (strain ATCC 204508 / S288c) (Baker's yeast)).